A 507-amino-acid polypeptide reads, in one-letter code: Steroid 17-alpha-hydroxylase/17,20 lyase (507 aa).

Cys-441 lines the heme pocket.

It belongs to the cytochrome P450 family. Heme is required as a cofactor.

The protein resides in the endoplasmic reticulum membrane. It localises to the microsome membrane. It carries out the reaction a C21-steroid + reduced [NADPH--hemoprotein reductase] + O2 = a 17alpha-hydroxy-C21-steroid + oxidized [NADPH--hemoprotein reductase] + H2O + H(+). The catalysed reaction is progesterone + reduced [NADPH--hemoprotein reductase] + O2 = 17alpha-hydroxyprogesterone + oxidized [NADPH--hemoprotein reductase] + H2O + H(+). The enzyme catalyses pregnenolone + reduced [NADPH--hemoprotein reductase] + O2 = 17alpha-hydroxypregnenolone + oxidized [NADPH--hemoprotein reductase] + H2O + H(+). It catalyses the reaction 17alpha-hydroxyprogesterone + reduced [NADPH--hemoprotein reductase] + O2 = androst-4-ene-3,17-dione + acetate + oxidized [NADPH--hemoprotein reductase] + H2O + 2 H(+). It carries out the reaction 17alpha-hydroxyprogesterone + reduced [NADPH--hemoprotein reductase] + O2 = 16alpha,17alpha-dihydroxyprogesterone + oxidized [NADPH--hemoprotein reductase] + H2O + H(+). The catalysed reaction is 16alpha,17alpha-dihydroxyprogesterone + reduced [NADPH--hemoprotein reductase] + O2 = 6beta,16alpha,17alpha-trihydroxyprogesterone + oxidized [NADPH--hemoprotein reductase] + H2O + H(+). The enzyme catalyses 17alpha-hydroxypregnenolone + reduced [NADPH--hemoprotein reductase] + O2 = 3beta-hydroxyandrost-5-en-17-one + acetate + oxidized [NADPH--hemoprotein reductase] + H2O + 2 H(+). It catalyses the reaction 16alpha,17alpha-dihydroxypregnenolone + reduced [NADPH--hemoprotein reductase] + O2 = 3beta,16alpha-dihydroxy-androst-5-en-17-one + acetate + oxidized [NADPH--hemoprotein reductase] + H2O + 2 H(+). It carries out the reaction 3beta-hydroxyandrost-5-en-17-one + reduced [NADPH--hemoprotein reductase] + O2 = 3beta,16alpha-dihydroxy-androst-5-en-17-one + oxidized [NADPH--hemoprotein reductase] + H2O + H(+). The catalysed reaction is androst-4-ene-3,17-dione + reduced [NADPH--hemoprotein reductase] + O2 = 16alpha-hydroxyandrost-4-ene-3,17-dione + oxidized [NADPH--hemoprotein reductase] + H2O + H(+). Its pathway is steroid hormone biosynthesis. It participates in steroid biosynthesis; glucocorticoid biosynthesis. With respect to regulation, regulated predominantly by intracellular cAMP levels. The 17,20-lyase activity is stimulated by cytochrome b5, which acts as an allosteric effector increasing the Vmax of the lyase activity. In terms of biological role, a cytochrome P450 monooxygenase involved in corticoid and androgen biosynthesis. Catalyzes 17-alpha hydroxylation of C21 steroids, which is common for both pathways. A second oxidative step, required only for androgen synthesis, involves an acyl-carbon cleavage. The 17-alpha hydroxy intermediates, as part of adrenal glucocorticoids biosynthesis pathway, are precursors of cortisol. Hydroxylates steroid hormones, pregnenolone and progesterone to form 17-alpha hydroxy metabolites, followed by the cleavage of the C17-C20 bond to form C19 steroids, dehydroepiandrosterone (DHEA) and androstenedione. Has 16-alpha hydroxylase activity. Catalyzes 16-alpha hydroxylation of 17-alpha hydroxy pregnenolone, followed by the cleavage of the C17-C20 bond to form 16-alpha-hydroxy DHEA. Also 16-alpha hydroxylates androgens, relevant for estriol synthesis. Mechanistically, uses molecular oxygen inserting one oxygen atom into a substrate, and reducing the second into a water molecule, with two electrons provided by NADPH via cytochrome P450 reductase (CPR; NADPH-ferrihemoprotein reductase). This is Steroid 17-alpha-hydroxylase/17,20 lyase (Cyp17a1) from Rattus norvegicus (Rat).